The following is a 209-amino-acid chain: Octanoyltransferase (209 aa).

Positions 30–209 (DHEPEIIYLV…IQTEFNKIFK (180 aa)) constitute a BPL/LPL catalytic domain. Residues 69-76 (RGGKFTFH), 143-145 (AIG), and 156-158 (GVA) each bind substrate. Catalysis depends on Cys-174, which acts as the Acyl-thioester intermediate.

This sequence belongs to the LipB family.

The protein localises to the cytoplasm. It carries out the reaction octanoyl-[ACP] + L-lysyl-[protein] = N(6)-octanoyl-L-lysyl-[protein] + holo-[ACP] + H(+). Its pathway is protein modification; protein lipoylation via endogenous pathway; protein N(6)-(lipoyl)lysine from octanoyl-[acyl-carrier-protein]: step 1/2. Catalyzes the transfer of endogenously produced octanoic acid from octanoyl-acyl-carrier-protein onto the lipoyl domains of lipoate-dependent enzymes. Lipoyl-ACP can also act as a substrate although octanoyl-ACP is likely to be the physiological substrate. The protein is Octanoyltransferase of Rickettsia africae (strain ESF-5).